We begin with the raw amino-acid sequence, 1087 residues long: Gelsolin-related protein of 125 kDa (1087 aa).

The disordered stretch occupies residues 1-40; the sequence is MEEDNIVDSKEIENNVEDKKEETPSSSPSPSSSLQQQQEE. The span at 7 to 23 shows a compositional bias: basic and acidic residues; that stretch reads VDSKEIENNVEDKKEET. The span at 24–40 shows a compositional bias: low complexity; it reads PSSSPSPSSSLQQQQEE. Gelsolin-like repeat units lie at residues 73–146, 183–286, 335–442, and 465–538; these read PFHF…PTFL, FLFK…FSKW, GKLL…FGTE, and TQLF…DNFW. Residues 550 to 598 adopt a coiled-coil conformation; the sequence is INTFINENKEEKEKEEEEKEEEEEEEEEEEEEEEEEKDNNKTTTIIKHL. Positions 555 to 592 are disordered; sequence NENKEEKEKEEEEKEEEEEEEEEEEEEEEEEKDNNKTT. Residues 562-586 are compositionally biased toward acidic residues; it reads EKEEEEKEEEEEEEEEEEEEEEEEK. Residues 614-692 form a Gelsolin-like 5 repeat; the sequence is IFKADQINPF…EQYNESPLFK (79 aa). Positions 710–912 form a coiled coil; it reads IISYKQKLAE…ETVNEENEVG (203 aa). Composition is skewed to basic and acidic residues over residues 732–770, 779–808, 817–840, and 849–900; these read KQQQEQEQEQQQKENNKIVEEVKEEVKEEDVKEEVKEEE, EEVKEVAKEETKEEIKEEVNDEATEVKEVN, EEVKEEVKVEVKEEEVKGEAKEEE, and EEVK…KVNE. The interval 732-1087 is disordered; sequence KQQQEQEQEQ…HNRSSSLTHA (356 aa). The span at 901–910 shows a compositional bias: acidic residues; that stretch reads ENETVNEENE. 2 stretches are compositionally biased toward polar residues: residues 925 to 939 and 950 to 961; these read ANSSSTISSPENEGS and EPITPSVVSSSG. The span at 983–1002 shows a compositional bias: basic residues; sequence QGRKGGRKSHGKNQPQHKKN. Positions 1018–1040 are enriched in polar residues; that stretch reads KSLNLDIDNQSFDLNSINNNNSV. The segment covering 1047–1065 has biased composition (low complexity); it reads SSPLSFSSSSINSNSTHNT. Residues 1066 to 1080 are compositionally biased toward basic residues; the sequence is PSKKNKNKNKKKHNR.

It belongs to the villin/gelsolin family. In terms of assembly, interacts with rasD and abpC.

It is found in the cytoplasmic vesicle. Functionally, involved in phototaxis. Required for coupling photodetection to the locomotory machinery of slugs. May be essential in the natural environment for the propagation of spores. This is Gelsolin-related protein of 125 kDa (gnrA) from Dictyostelium discoideum (Social amoeba).